The sequence spans 156 residues: Ribosomal RNA large subunit methyltransferase H (156 aa).

Residues Leu-73, Gly-104, and 123–128 (VSSLTL) contribute to the S-adenosyl-L-methionine site.

The protein belongs to the RNA methyltransferase RlmH family. In terms of assembly, homodimer.

It localises to the cytoplasm. It catalyses the reaction pseudouridine(1915) in 23S rRNA + S-adenosyl-L-methionine = N(3)-methylpseudouridine(1915) in 23S rRNA + S-adenosyl-L-homocysteine + H(+). Functionally, specifically methylates the pseudouridine at position 1915 (m3Psi1915) in 23S rRNA. The protein is Ribosomal RNA large subunit methyltransferase H of Paraburkholderia phymatum (strain DSM 17167 / CIP 108236 / LMG 21445 / STM815) (Burkholderia phymatum).